Reading from the N-terminus, the 294-residue chain is Thymidylate synthase (294 aa).

DUMP contacts are provided by residues arginine 31 and 156–157 (RR). Cysteine 176 serves as the catalytic Nucleophile. DUMP-binding positions include 196 to 199 (RSAD), asparagine 207, and 237 to 239 (HIY). Aspartate 199 lines the (6R)-5,10-methylene-5,6,7,8-tetrahydrofolate pocket. Alanine 293 is a binding site for (6R)-5,10-methylene-5,6,7,8-tetrahydrofolate.

It belongs to the thymidylate synthase family. Homodimer.

It carries out the reaction dUMP + (6R)-5,10-methylene-5,6,7,8-tetrahydrofolate = 7,8-dihydrofolate + dTMP. Its pathway is pyrimidine metabolism; dTTP biosynthesis. This chain is Thymidylate synthase (70), found in Saimiri sciureus (Common squirrel monkey).